The sequence spans 287 residues: Succinate dehydrogenase [ubiquinone] iron-sulfur subunit, mitochondrial (287 aa).

Residues 1 to 23 (MISNVLKRASVLARSNGIQSAFY) constitute a mitochondrion transit peptide. The 90-residue stretch at 51 to 140 (FQVYRYNEET…GDTVKVYPLP (90 aa)) folds into the 2Fe-2S ferredoxin-type domain. Residues Cys101, Cys106, Cys109, and Cys121 each coordinate [2Fe-2S] cluster. In terms of domain architecture, 4Fe-4S ferredoxin-type spans 186 to 216 (NRHKLDGLYECILCACCSTSCPSYWWSEGGD). [4Fe-4S] cluster contacts are provided by Cys196, Cys199, and Cys202. Cys206 contacts [3Fe-4S] cluster. Residue Trp211 coordinates a ubiquinone. Cys257 and Cys263 together coordinate [3Fe-4S] cluster. A [4Fe-4S] cluster-binding site is contributed by Cys267.

Belongs to the succinate dehydrogenase/fumarate reductase iron-sulfur protein family. As to quaternary structure, component of complex II composed of four subunits: the flavoprotein (FP) SDHA, iron-sulfur protein (IP) SDHB, and a cytochrome b composed of a large and a small subunit. The cofactor is [2Fe-2S] cluster. [3Fe-4S] cluster is required as a cofactor. [4Fe-4S] cluster serves as cofactor.

Its subcellular location is the mitochondrion inner membrane. It catalyses the reaction a quinone + succinate = fumarate + a quinol. Its pathway is carbohydrate metabolism; tricarboxylic acid cycle; fumarate from succinate (eukaryal route): step 1/1. Iron-sulfur protein (IP) subunit of succinate dehydrogenase (SDH) that is involved in complex II of the mitochondrial electron transport chain and is responsible for transferring electrons from succinate to ubiquinone (coenzyme Q). This chain is Succinate dehydrogenase [ubiquinone] iron-sulfur subunit, mitochondrial (sdhB), found in Dictyostelium discoideum (Social amoeba).